A 459-amino-acid chain; its full sequence is GTPase Der (459 aa).

EngA-type G domains lie at 4-169 (PLVA…PEVA) and 179-355 (IAVA…AAHR). Residues 10–17 (GRPNVGKS), 57–61 (DTGGL), 120–123 (NKCE), 185–192 (GRPNVGKS), 232–236 (DTAGI), and 297–300 (NKWD) contribute to the GTP site. Residues 356 to 441 (KRIATSVVNE…PIRFRWRSKS (86 aa)) form the KH-like domain.

This sequence belongs to the TRAFAC class TrmE-Era-EngA-EngB-Septin-like GTPase superfamily. EngA (Der) GTPase family. As to quaternary structure, associates with the 50S ribosomal subunit.

Its function is as follows. GTPase that plays an essential role in the late steps of ribosome biogenesis. The protein is GTPase Der of Synechococcus sp. (strain JA-3-3Ab) (Cyanobacteria bacterium Yellowstone A-Prime).